The sequence spans 79 residues: Large ribosomal subunit protein uL24 (79 aa).

This sequence belongs to the universal ribosomal protein uL24 family. Part of the 50S ribosomal subunit.

Its function is as follows. One of two assembly initiator proteins, it binds directly to the 5'-end of the 23S rRNA, where it nucleates assembly of the 50S subunit. One of the proteins that surrounds the polypeptide exit tunnel on the outside of the subunit. This Lactobacillus gasseri (strain ATCC 33323 / DSM 20243 / BCRC 14619 / CIP 102991 / JCM 1131 / KCTC 3163 / NCIMB 11718 / NCTC 13722 / AM63) protein is Large ribosomal subunit protein uL24.